The chain runs to 456 residues: Bifunctional protein GlmU (456 aa).

The segment at 1-229 (MSNRPMSVVI…TTETDGVNNR (229 aa)) is pyrophosphorylase. UDP-N-acetyl-alpha-D-glucosamine-binding positions include 11 to 14 (LAAG), Lys25, Gln76, 81 to 82 (GT), 103 to 105 (YGD), Gly140, Glu154, Asn169, and Asn227. Residue Asp105 coordinates Mg(2+). Asn227 is a Mg(2+) binding site. Residues 230–250 (LQLATLERVYQAEQAEKLLLS) are linker. Residues 251 to 456 (GVMLQDPARF…ASWQRPQKKK (206 aa)) are N-acetyltransferase. The UDP-N-acetyl-alpha-D-glucosamine site is built by Arg333 and Lys351. The Proton acceptor role is filled by His363. Positions 366 and 377 each coordinate UDP-N-acetyl-alpha-D-glucosamine. Residues Ala380, 386–387 (NY), Ser405, Ala423, and Arg440 contribute to the acetyl-CoA site.

It in the N-terminal section; belongs to the N-acetylglucosamine-1-phosphate uridyltransferase family. The protein in the C-terminal section; belongs to the transferase hexapeptide repeat family. As to quaternary structure, homotrimer. Requires Mg(2+) as cofactor.

It is found in the cytoplasm. It catalyses the reaction alpha-D-glucosamine 1-phosphate + acetyl-CoA = N-acetyl-alpha-D-glucosamine 1-phosphate + CoA + H(+). The enzyme catalyses N-acetyl-alpha-D-glucosamine 1-phosphate + UTP + H(+) = UDP-N-acetyl-alpha-D-glucosamine + diphosphate. The protein operates within nucleotide-sugar biosynthesis; UDP-N-acetyl-alpha-D-glucosamine biosynthesis; N-acetyl-alpha-D-glucosamine 1-phosphate from alpha-D-glucosamine 6-phosphate (route II): step 2/2. It participates in nucleotide-sugar biosynthesis; UDP-N-acetyl-alpha-D-glucosamine biosynthesis; UDP-N-acetyl-alpha-D-glucosamine from N-acetyl-alpha-D-glucosamine 1-phosphate: step 1/1. Its pathway is bacterial outer membrane biogenesis; LPS lipid A biosynthesis. Its function is as follows. Catalyzes the last two sequential reactions in the de novo biosynthetic pathway for UDP-N-acetylglucosamine (UDP-GlcNAc). The C-terminal domain catalyzes the transfer of acetyl group from acetyl coenzyme A to glucosamine-1-phosphate (GlcN-1-P) to produce N-acetylglucosamine-1-phosphate (GlcNAc-1-P), which is converted into UDP-GlcNAc by the transfer of uridine 5-monophosphate (from uridine 5-triphosphate), a reaction catalyzed by the N-terminal domain. The polypeptide is Bifunctional protein GlmU (Erwinia tasmaniensis (strain DSM 17950 / CFBP 7177 / CIP 109463 / NCPPB 4357 / Et1/99)).